We begin with the raw amino-acid sequence, 1715 residues long: Sodium channel protein type 4 subunit alpha B (1715 aa).

Residues 1 to 126 (MGTLLPPVGS…IFAIKILVHS (126 aa)) are Cytoplasmic-facing. The stretch at 108-431 (LLSPFNSMRI…VVAMAYAEQN (324 aa)) is one I repeat. A helical transmembrane segment spans residues 127 to 145 (LFSLFIMATILTNCVFMTL). The Extracellular portion of the chain corresponds to 146-152 (SDPPAWS). A helical membrane pass occupies residues 153-173 (KTVEYVFTFIYTFEATIKVVS). Topologically, residues 174 to 187 (RGFCVGQFTFLKDP) are cytoplasmic. Residues 188-205 (WNWLDFMVISMAYLTELV) traverse the membrane as a helical segment. Over 206 to 211 (DLGNVS) the chain is Extracellular. Asn-209 is a glycosylation site (N-linked (GlcNAc...) asparagine). Residues 212 to 228 (VLRTFRVLRALKTITVI) traverse the membrane as a helical segment. Over 229–247 (PGLKTIVGALIQSVKKLAD) the chain is Cytoplasmic. A helical transmembrane segment spans residues 248–267 (AMVLTVFCLSVFALIGLQLF). Residues 268–368 (MGNLRQKCVL…PNYGYTSYDS (101 aa)) lie on the Extracellular side of the membrane. A disulfide bridge links Cys-275 with Cys-337. N-linked (GlcNAc...) asparagine glycosylation is found at Asn-284, Asn-304, and Asn-339. Cys-346 and Cys-352 are joined by a disulfide. Residues 369 to 393 (FGWAFLALFRLMTQDFWENLFQLTL) constitute an intramembrane region (pore-forming). The Extracellular segment spans residues 394–400 (RAAGKTY). Residues 401–421 (MIFFVVVIFLGSFYLINLILA) traverse the membrane as a helical segment. The Cytoplasmic segment spans residues 422–515 (VVAMAYAEQN…RCLSAIVMDP (94 aa)). The stretch at 497–768 (CCSCWRHLKR…QIAVNRIKRA (272 aa)) is one II repeat. Residues 516 to 534 (FVDLGITICIILNTIFMAM) traverse the membrane as a helical segment. The Extracellular portion of the chain corresponds to 535–545 (EHYPMSADFEE). A helical membrane pass occupies residues 546 to 565 (LLSVGNLVFTGIFTCEMVLK). At 566 to 579 (ILAMDPYFYFQVGW) the chain is on the cytoplasmic side. The chain crosses the membrane as a helical span at residues 580–599 (NIFDSIIVTMSLVELGLANV). At 600–601 (QG) the chain is on the extracellular side. Residues 602–619 (LSVLRSFRLMRVFKLAKS) form a helical membrane-spanning segment. Residues 620–635 (WPTLNMLIKIIGNSVG) lie on the Cytoplasmic side of the membrane. A helical membrane pass occupies residues 636 to 654 (ALGNLTLVLAIIVFIFAVV). At 655–683 (GMQLFGKNYKDCVCRISEDCKLPRWHMND) the chain is on the extracellular side. A disulfide bond links Cys-668 and Cys-674. An intramembrane region (pore-forming) is located at residues 684–704 (FFHAFLIIFRVLCGEWIDTMW). Residues 705–715 (DCMEVSGQTMC) are Extracellular-facing. An intrachain disulfide couples Cys-706 to Cys-715. Residues 716-734 (LIVYMMVLVIGNLVVLNLF) traverse the membrane as a helical segment. Residues 735-915 (LALLLSSFSG…ACFIIVENNY (181 aa)) are Cytoplasmic-facing. The interval 824–865 (EAESDSEDSDDDDVDEDKHSRCDESSFCSTVQDPEVKENEAD) is disordered. Acidic residues predominate over residues 825–838 (AESDSEDSDDDDVD). The III repeat unit spans residues 896–1211 (KGKVWCNIRR…KKYYNAMKKL (316 aa)). The helical transmembrane segment at 916–933 (FESFIVFMILLSSGALAF) threads the bilayer. Residues 934 to 946 (EDIYLEKHQLIKT) lie on the Extracellular side of the membrane. The helical transmembrane segment at 947-965 (ILEYADKVFTYVFVVEMVL) threads the bilayer. Residues 966–979 (KWFAYGFKSYFSNA) lie on the Cytoplasmic side of the membrane. The helical transmembrane segment at 980–998 (WCWLDFLIVDVSLVSLTAN) threads the bilayer. Residues 999–1006 (ILGYSELG) lie on the Extracellular side of the membrane. Residues 1007–1025 (AIKSLRTLRALRPLRALSR) traverse the membrane as a helical segment. Residues 1026-1042 (FEGMRVVVNALVGAVPS) are Cytoplasmic-facing. The chain crosses the membrane as a helical span at residues 1043–1062 (IFNVLLVCLIFWLIFSIMGV). At 1063-1115 (NLFAGKFSYCFNETSQEQFDKKIVNNKTECIALIEANFTEVRWKNLKVNYDNV) the chain is on the extracellular side. Residues Cys-1072 and Cys-1092 are joined by a disulfide bond. 2 N-linked (GlcNAc...) asparagine glycosylation sites follow: Asn-1074 and Asn-1088. The pore-forming intramembrane region spans 1116–1137 (GIGYLSLLQVATFKGWMEIMYA). Residues 1138 to 1154 (AVDSRDVESQPIYEVNI) are Extracellular-facing. Residues 1155–1176 (YMYLYFVIFIIFGSFFTLNLFI) form a helical membrane-spanning segment. At 1177–1239 (GVIIDNFNQQ…LVFDLVTKQI (63 aa)) the chain is on the cytoplasmic side. The tract at residues 1195 to 1197 (IFM) is important for rapid channel inactivation. Residues 1220 to 1517 (VPRPENALQG…WEKFDPDATQ (298 aa)) form an IV repeat. A helical transmembrane segment spans residues 1240-1257 (FDVFIMVLICLNMVTMMV). Residues 1258 to 1268 (ETDEQTKEKED) are Extracellular-facing. A helical transmembrane segment spans residues 1269 to 1287 (ILYWINVIFIVIFTTECIL). Over 1288–1299 (KTIALRRHYFSI) the chain is Cytoplasmic. Residues 1300-1317 (GWNVFDFVVVILSILGLL) form a helical membrane-spanning segment. Topologically, residues 1318–1330 (LADIIEKYFVSPT) are extracellular. The chain crosses the membrane as a helical span at residues 1331 to 1347 (LFRVIRLARIGRVLRLI). Residues 1348-1366 (RGAKGIRTLLFALMMSLPA) lie on the Cytoplasmic side of the membrane. A helical membrane pass occupies residues 1367 to 1384 (LFNIGLLLFLIMFIFSIF). The Extracellular segment spans residues 1385–1406 (GMSNFAYVKKEAMIDDMFNFET). Residues 1407 to 1429 (FGNSMICLFMITTSAGWDGLLSP) constitute an intramembrane region (pore-forming). At 1430 to 1458 (IMNKPPDCDPDLENPGTTVRGNCGSPAIG) the chain is on the extracellular side. An intrachain disulfide couples Cys-1437 to Cys-1452. Residues 1459–1481 (IVFFSTYIIMSFLVVVNMYIAII) form a helical membrane-spanning segment. At 1482–1715 (LENFNVATEE…LGTSERESLV (234 aa)) the chain is on the cytoplasmic side. Positions 1611 to 1640 (EEVAARVIQRAYRKYLLQRTVRLASFTYRE) constitute an IQ domain.

It belongs to the sodium channel (TC 1.A.1.10) family. Nav1.4/SCN4A subfamily. In terms of assembly, voltage-gated sodium (Nav) channels consist of an ion-conducting alpha subunit which is functional on its own associated with regulatory beta subunits.

It is found in the cell membrane. It carries out the reaction Na(+)(in) = Na(+)(out). In terms of biological role, pore-forming subunit of a voltage-gated sodium (Nav) channel that directly mediates the depolarizing phase of action potentials in excitable membranes. Navs, also called VGSCs (voltage-gated sodium channels) or VDSCs (voltage-dependent sodium channels), operate by switching between closed and open conformations depending on the voltage difference across the membrane. In the open conformation they allow Na(+) ions to selectively pass through the pore, along their electrochemical gradient. The influx of Na+ ions provokes membrane depolarization, initiating the propagation of electrical signals throughout cells and tissues. This is Sodium channel protein type 4 subunit alpha B (scn4ab) from Tetraodon nigroviridis (Spotted green pufferfish).